The chain runs to 82 residues: Capsid protein G8P (82 aa).

An N-terminal signal peptide occupies residues 1 to 28; sequence MKAMKQRIAKFSPVASFRNLCIAGSVTA. The Periplasmic segment spans residues 29 to 57; the sequence is ATSLPAFAGVIDTSAVESAITDGQGDMKA. The chain crosses the membrane as a helical span at residues 58–78; sequence IGGYIVGALVILAVAGLIYSM. At 79-82 the chain is on the cytoplasmic side; the sequence is LRKA.

Belongs to the inovirus capsid protein family. Homomultimerizes. There are several thousands of this protein in the phage capsid.

It localises to the virion. The protein resides in the host membrane. Functionally, self assembles to form a helical capsid wrapping up the viral genomic DNA. The capsid displays a filamentous structure with a length of 760-1950 nm and a width of 6-8 nm. The virion assembly and budding take place at the host inner membrane. The polypeptide is Capsid protein G8P (VIII) (Pseudomonas phage Pf1 (Bacteriophage Pf1)).